We begin with the raw amino-acid sequence, 71 residues long: SRY-related protein LG28 (71 aa).

The HMG box DNA-binding region spans 1–68 (VKRPMNAFMV…KHMADYPDYK (68 aa)).

It localises to the nucleus. In Eublepharis macularius (Leopard gecko), this protein is SRY-related protein LG28.